Here is a 558-residue protein sequence, read N- to C-terminus: FRIGIDA-like protein 3 (558 aa).

Positions 9–102 (SLMDSTSSKI…ALERLQKKRD (94 aa)) form a coiled coil. Positions 454–463 (AKADKKRATE) are enriched in basic and acidic residues. Residues 454–494 (AKADKKRATEPMKPQPKRPRGAQPRVTDNNNNINNNKTGYG) are disordered.

Belongs to the Frigida family.

In Arabidopsis thaliana (Mouse-ear cress), this protein is FRIGIDA-like protein 3 (FRL3).